Consider the following 351-residue polypeptide: S-adenosylmethionine:tRNA ribosyltransferase-isomerase (351 aa).

This sequence belongs to the QueA family. Monomer.

Its subcellular location is the cytoplasm. It carries out the reaction 7-aminomethyl-7-carbaguanosine(34) in tRNA + S-adenosyl-L-methionine = epoxyqueuosine(34) in tRNA + adenine + L-methionine + 2 H(+). The protein operates within tRNA modification; tRNA-queuosine biosynthesis. In terms of biological role, transfers and isomerizes the ribose moiety from AdoMet to the 7-aminomethyl group of 7-deazaguanine (preQ1-tRNA) to give epoxyqueuosine (oQ-tRNA). The polypeptide is S-adenosylmethionine:tRNA ribosyltransferase-isomerase (Idiomarina loihiensis (strain ATCC BAA-735 / DSM 15497 / L2-TR)).